The following is a 421-amino-acid chain: Histidine--tRNA ligase (421 aa).

The protein belongs to the class-II aminoacyl-tRNA synthetase family. Homodimer.

The protein localises to the cytoplasm. The enzyme catalyses tRNA(His) + L-histidine + ATP = L-histidyl-tRNA(His) + AMP + diphosphate + H(+). The sequence is that of Histidine--tRNA ligase from Coxiella burnetii (strain CbuG_Q212) (Coxiella burnetii (strain Q212)).